A 90-amino-acid polypeptide reads, in one-letter code: Probable Fe(2+)-trafficking protein (90 aa).

Belongs to the Fe(2+)-trafficking protein family.

In terms of biological role, could be a mediator in iron transactions between iron acquisition and iron-requiring processes, such as synthesis and/or repair of Fe-S clusters in biosynthetic enzymes. In Nitrosomonas eutropha (strain DSM 101675 / C91 / Nm57), this protein is Probable Fe(2+)-trafficking protein.